Reading from the N-terminus, the 238-residue chain is Large ribosomal subunit protein uL1 (238 aa).

A disordered region spans residues 217 to 238; the sequence is TNGPGVPVDETIQKNYADDAEA.

The protein belongs to the universal ribosomal protein uL1 family. In terms of assembly, part of the 50S ribosomal subunit.

In terms of biological role, binds directly to 23S rRNA. The L1 stalk is quite mobile in the ribosome, and is involved in E site tRNA release. Functionally, protein L1 is also a translational repressor protein, it controls the translation of the L11 operon by binding to its mRNA. This is Large ribosomal subunit protein uL1 from Corynebacterium urealyticum (strain ATCC 43042 / DSM 7109).